The chain runs to 53 residues: Large ribosomal subunit protein bL32c (53 aa).

It belongs to the bacterial ribosomal protein bL32 family.

The protein localises to the plastid. It is found in the chloroplast. This is Large ribosomal subunit protein bL32c from Coffea arabica (Arabian coffee).